We begin with the raw amino-acid sequence, 34 residues long: Photosystem I reaction center subunit XII (34 aa).

A helical membrane pass occupies residues 9-29; that stretch reads LIILGLIVVMHAGVLALRLGI.

Belongs to the PsaM family.

Its subcellular location is the cellular thylakoid membrane. The sequence is that of Photosystem I reaction center subunit XII from Prochlorococcus marinus subsp. pastoris (strain CCMP1986 / NIES-2087 / MED4).